The primary structure comprises 366 residues: UDP-N-acetylglucosamine--N-acetylmuramyl-(pentapeptide) pyrophosphoryl-undecaprenol N-acetylglucosamine transferase (366 aa).

Residues 14–16 (TGG), asparagine 125, arginine 168, serine 196, and glutamine 297 contribute to the UDP-N-acetyl-alpha-D-glucosamine site.

This sequence belongs to the glycosyltransferase 28 family. MurG subfamily.

The protein resides in the cell inner membrane. It carries out the reaction di-trans,octa-cis-undecaprenyl diphospho-N-acetyl-alpha-D-muramoyl-L-alanyl-D-glutamyl-meso-2,6-diaminopimeloyl-D-alanyl-D-alanine + UDP-N-acetyl-alpha-D-glucosamine = di-trans,octa-cis-undecaprenyl diphospho-[N-acetyl-alpha-D-glucosaminyl-(1-&gt;4)]-N-acetyl-alpha-D-muramoyl-L-alanyl-D-glutamyl-meso-2,6-diaminopimeloyl-D-alanyl-D-alanine + UDP + H(+). The protein operates within cell wall biogenesis; peptidoglycan biosynthesis. Cell wall formation. Catalyzes the transfer of a GlcNAc subunit on undecaprenyl-pyrophosphoryl-MurNAc-pentapeptide (lipid intermediate I) to form undecaprenyl-pyrophosphoryl-MurNAc-(pentapeptide)GlcNAc (lipid intermediate II). This is UDP-N-acetylglucosamine--N-acetylmuramyl-(pentapeptide) pyrophosphoryl-undecaprenol N-acetylglucosamine transferase from Rhodopseudomonas palustris (strain HaA2).